We begin with the raw amino-acid sequence, 210 residues long: Outer-membrane lipoprotein carrier protein (210 aa).

The signal sequence occupies residues 1 to 22 (MRAFKWALAIGATLALPLTAQA).

It belongs to the LolA family. As to quaternary structure, monomer.

The protein localises to the periplasm. Functionally, participates in the translocation of lipoproteins from the inner membrane to the outer membrane. Only forms a complex with a lipoprotein if the residue after the N-terminal Cys is not an aspartate (The Asp acts as a targeting signal to indicate that the lipoprotein should stay in the inner membrane). In Chromohalobacter salexigens (strain ATCC BAA-138 / DSM 3043 / CIP 106854 / NCIMB 13768 / 1H11), this protein is Outer-membrane lipoprotein carrier protein.